The chain runs to 347 residues: S-adenosylmethionine:tRNA ribosyltransferase-isomerase (347 aa).

The protein belongs to the QueA family. As to quaternary structure, monomer.

It is found in the cytoplasm. It carries out the reaction 7-aminomethyl-7-carbaguanosine(34) in tRNA + S-adenosyl-L-methionine = epoxyqueuosine(34) in tRNA + adenine + L-methionine + 2 H(+). It participates in tRNA modification; tRNA-queuosine biosynthesis. In terms of biological role, transfers and isomerizes the ribose moiety from AdoMet to the 7-aminomethyl group of 7-deazaguanine (preQ1-tRNA) to give epoxyqueuosine (oQ-tRNA). This Pseudomonas aeruginosa (strain ATCC 15692 / DSM 22644 / CIP 104116 / JCM 14847 / LMG 12228 / 1C / PRS 101 / PAO1) protein is S-adenosylmethionine:tRNA ribosyltransferase-isomerase.